Consider the following 347-residue polypeptide: N-acetyl-gamma-glutamyl-phosphate reductase (347 aa).

Cys152 is an active-site residue.

It belongs to the NAGSA dehydrogenase family. Type 1 subfamily.

Its subcellular location is the cytoplasm. The catalysed reaction is N-acetyl-L-glutamate 5-semialdehyde + phosphate + NADP(+) = N-acetyl-L-glutamyl 5-phosphate + NADPH + H(+). Its pathway is amino-acid biosynthesis; L-arginine biosynthesis; N(2)-acetyl-L-ornithine from L-glutamate: step 3/4. In terms of biological role, catalyzes the NADPH-dependent reduction of N-acetyl-5-glutamyl phosphate to yield N-acetyl-L-glutamate 5-semialdehyde. This is N-acetyl-gamma-glutamyl-phosphate reductase from Neisseria meningitidis serogroup A / serotype 4A (strain DSM 15465 / Z2491).